The primary structure comprises 306 residues: MAAMEANIFCTFDHKLSIADVGKLTKLVAAVVPIPQRLHLIKHYQLGLHQFVDHTRGYVRLRGLLRNMTLTLMRRVEGNQILLHVPTHGLLYTVLNTGPVTWEKGDALCVLPPLFHGPLARENLLTLGQWELVLPWIVPMPLALEINQRLLIMGLFSLDRSYEEVKAAVQQLQTITFRDATFTIPDPVIDQHLLIDMKTACLSMSMVANLASELTMTYVRKLALEDSSMLLVKCQELLMRLDRERSVGEPRTPARPQHVSPDDEIARLSALFVMLRQLDDLIREQVVFTVCDVSPDNKSATCIFKG.

It belongs to the herpesviridae TRX2 protein family. Interacts with TRX1 and major capisd protein/MCP.

It is found in the virion. The protein localises to the host nucleus. In terms of biological role, structural component of the T=16 icosahedral capsid. The capsid is composed of pentamers and hexamers of major capsid protein/MCP, which are linked together by heterotrimers called triplexes. These triplexes are formed by a single molecule of triplex protein 1/TRX1 and two copies of triplex protein 2/TRX2. Additionally, TRX1 is required for efficient transport of TRX2 to the nucleus, which is the site of capsid assembly. This Human cytomegalovirus (strain AD169) (HHV-5) protein is Triplex capsid protein 2.